The primary structure comprises 340 residues: MYKNWRDLIRPKQLQFEKESLSDTYGKFFAEPFERGFATTLGNSLRRILLSSLQGSAITSVRIKGVLHEFSAIQGVTEDVTDIILNLKGVRLKLHSVVQATIRVVHTGEGVVKAGDFVVGHNVEIMNPEHHIATCGKDAHFEMDMTVKMGKGYVSADKNRDEKAPVGTIPIDSIFSPIKKVNFTISNARVGQMTDYDKLTLEIWTDGSVKPDDALAYSAKIMKEQLSIFINFDEEAEPQAPEESQDEIDKINENLYRTVEELELSVRSANCLKNAGIKLIGELVSKTEAEMLKTQNFGRKSLNEIKDILSDMGLTFGMKLDSFPEPDMLRRLRGEQNEEE.

The interval 1 to 233 (MYKNWRDLIR…EQLSIFINFD (233 aa)) is alpha N-terminal domain (alpha-NTD). The interval 246 to 340 (DEIDKINENL…RLRGEQNEEE (95 aa)) is alpha C-terminal domain (alpha-CTD).

It belongs to the RNA polymerase alpha chain family. Homodimer. The RNAP catalytic core consists of 2 alpha, 1 beta, 1 beta' and 1 omega subunit. When a sigma factor is associated with the core the holoenzyme is formed, which can initiate transcription.

It catalyses the reaction RNA(n) + a ribonucleoside 5'-triphosphate = RNA(n+1) + diphosphate. Functionally, DNA-dependent RNA polymerase catalyzes the transcription of DNA into RNA using the four ribonucleoside triphosphates as substrates. This chain is DNA-directed RNA polymerase subunit alpha, found in Pelobacter propionicus (strain DSM 2379 / NBRC 103807 / OttBd1).